A 263-amino-acid polypeptide reads, in one-letter code: 3'-5' ssDNA/RNA exonuclease TatD (263 aa).

A divalent metal cation-binding residues include Glu91, His127, and His152.

This sequence belongs to the metallo-dependent hydrolases superfamily. TatD-type hydrolase family. TatD subfamily. In terms of assembly, monomer. It depends on Mg(2+) as a cofactor.

It localises to the cytoplasm. In terms of biological role, 3'-5' exonuclease that prefers single-stranded DNA and RNA. May play a role in the H(2)O(2)-induced DNA damage repair. The chain is 3'-5' ssDNA/RNA exonuclease TatD from Citrobacter rodentium (strain ICC168) (Citrobacter freundii biotype 4280).